Here is a 295-residue protein sequence, read N- to C-terminus: Bifunctional protein FolD (295 aa).

NADP(+) is bound by residues 165 to 167 (GRS), S190, and I231.

This sequence belongs to the tetrahydrofolate dehydrogenase/cyclohydrolase family. In terms of assembly, homodimer.

It catalyses the reaction (6R)-5,10-methylene-5,6,7,8-tetrahydrofolate + NADP(+) = (6R)-5,10-methenyltetrahydrofolate + NADPH. It carries out the reaction (6R)-5,10-methenyltetrahydrofolate + H2O = (6R)-10-formyltetrahydrofolate + H(+). Its pathway is one-carbon metabolism; tetrahydrofolate interconversion. In terms of biological role, catalyzes the oxidation of 5,10-methylenetetrahydrofolate to 5,10-methenyltetrahydrofolate and then the hydrolysis of 5,10-methenyltetrahydrofolate to 10-formyltetrahydrofolate. This Nitrosomonas eutropha (strain DSM 101675 / C91 / Nm57) protein is Bifunctional protein FolD.